Reading from the N-terminus, the 393-residue chain is Riboflavin biosynthesis protein RibBA (393 aa).

The segment at 1 to 200 (MQFDNIDSAL…IDDLIEYRKK (200 aa)) is DHBP synthase. Residues 27-28 (RE), aspartate 32, 139-143 (RNGHT), and glutamate 163 contribute to the D-ribulose 5-phosphate site. Glutamate 28 contacts Mg(2+). Histidine 142 provides a ligand contact to Mg(2+). The segment at 201 to 393 (LEPEIEFKAK…TKKIKMGHLI (193 aa)) is GTP cyclohydrolase II. 249–253 (RLHSA) lines the GTP pocket. Zn(2+) is bound by residues cysteine 254, cysteine 265, and cysteine 267. GTP contacts are provided by residues glutamine 270, 291-293 (EGR), and threonine 313. The active-site Proton acceptor; for GTP cyclohydrolase activity is aspartate 325. The active-site Nucleophile; for GTP cyclohydrolase activity is arginine 327. Serine 348 and lysine 353 together coordinate GTP.

It in the N-terminal section; belongs to the DHBP synthase family. The protein in the C-terminal section; belongs to the GTP cyclohydrolase II family. It depends on Mg(2+) as a cofactor. Mn(2+) serves as cofactor. Zn(2+) is required as a cofactor.

The catalysed reaction is D-ribulose 5-phosphate = (2S)-2-hydroxy-3-oxobutyl phosphate + formate + H(+). The enzyme catalyses GTP + 4 H2O = 2,5-diamino-6-hydroxy-4-(5-phosphoribosylamino)-pyrimidine + formate + 2 phosphate + 3 H(+). Its pathway is cofactor biosynthesis; riboflavin biosynthesis; 2-hydroxy-3-oxobutyl phosphate from D-ribulose 5-phosphate: step 1/1. It functions in the pathway cofactor biosynthesis; riboflavin biosynthesis; 5-amino-6-(D-ribitylamino)uracil from GTP: step 1/4. In terms of biological role, catalyzes the conversion of D-ribulose 5-phosphate to formate and 3,4-dihydroxy-2-butanone 4-phosphate. Functionally, catalyzes the conversion of GTP to 2,5-diamino-6-ribosylamino-4(3H)-pyrimidinone 5'-phosphate (DARP), formate and pyrophosphate. The protein is Riboflavin biosynthesis protein RibBA of Staphylococcus aureus (strain MRSA252).